The sequence spans 82 residues: MQNDEGKIVDLYIPRKCSATNRLISATDHAAVQINVGHVDPNSGLYTGDYTTFALCGFVRSMGESDAALNRLCVKHGLAKAI.

It belongs to the eukaryotic ribosomal protein eS21 family.

The polypeptide is Small ribosomal subunit protein eS21 (RPS21) (Cyanophora paradoxa).